Reading from the N-terminus, the 375-residue chain is Chaperone protein DnaJ (375 aa).

Residues 5-70 (DYYEVLGVSR…QKRAAYDQFG (66 aa)) form the J domain. The segment at 131-209 (GTTVKIRVPS…CHGSGYVEEQ (79 aa)) adopts a CR-type zinc-finger fold. Zn(2+) is bound by residues Cys-144, Cys-147, Cys-161, Cys-164, Cys-183, Cys-186, Cys-197, and Cys-200. CXXCXGXG motif repeat units follow at residues 144-151 (CKSCSGSG), 161-168 (CGTCNGAG), 183-190 (CPRCRGAG), and 197-204 (CRSCHGSG).

The protein belongs to the DnaJ family. As to quaternary structure, homodimer. The cofactor is Zn(2+).

Its subcellular location is the cytoplasm. Functionally, participates actively in the response to hyperosmotic and heat shock by preventing the aggregation of stress-denatured proteins and by disaggregating proteins, also in an autonomous, DnaK-independent fashion. Unfolded proteins bind initially to DnaJ; upon interaction with the DnaJ-bound protein, DnaK hydrolyzes its bound ATP, resulting in the formation of a stable complex. GrpE releases ADP from DnaK; ATP binding to DnaK triggers the release of the substrate protein, thus completing the reaction cycle. Several rounds of ATP-dependent interactions between DnaJ, DnaK and GrpE are required for fully efficient folding. Also involved, together with DnaK and GrpE, in the DNA replication of plasmids through activation of initiation proteins. This Hahella chejuensis (strain KCTC 2396) protein is Chaperone protein DnaJ.